Here is an 827-residue protein sequence, read N- to C-terminus: MLDCLRLALLCALPWLLRAAVPGHQEEPLAKSAELRRDPRDPARGADFDRVYSGVVSLSTENIYSFNHTSHPGQVTAVRVHVNSSSDNLDYPVLVVVRQQKEVLSWQVPLLFQGLYQRSYNYQEVSRTLCPSKATNETGPLEQLIFVDVASMAPHGAHYKLLVTKIKHFQLPTNVAFYFTASPSQPQYFLYKFPEDVDSVIIKVVSEKAYPCSVVSVQNIMCPVYDLDHNVEFNGVYQSMTKKAAITLQKKDFPDEQFFVVFVIKPEDYACGGSFSIQENENQTWNLQRSKNLKVTIVPSIKESVYVKSSLFSIFVFLSFYLGCLLVVLVHHVRFQRKSIDGSFGSSDGSGNMAVSHPITASTPEGSNYGAIDESSSSPGRQMSSSDGGQPCHSDTDSSVEESDFDTMPDIESDKNVIRTKMFLYLSDLSRKDRRIVSKKYKIYFWNIITIAVFYALPVMQLVITYQTVVNVTGNQDICYYNFLCAHPLGVLSAFNNILSNLGHVLLGFLFLLIVLRRDLLHRRALEAKDIFAMEYGIPKHFGLFYAMGIALMMEGVLSACYHVCPNYSNFQFDTSFMYMIAGLCMLKLYQTRHPDINASAYSAYASFAVVITLTVLGVVFGKNDVWFWIIFSAIHILSSLALSTQIYYMGRFKIDLGIFRRAAMVFYTDCIQQCSRPLYMDRMVLLIVGNLVNWSFAFFGLIYRPRDFASYMLGIFICNLLLYLAFYIIMKLRSSEKVLPLPVFCIAATAVVWAAALYFFFQNLSSWEGTPAESREKNRECVLLDFFDDHDIWHFLSATALFFSFLVLLTLDDDLDVVRRDQIPVF.

The N-terminal stretch at 1 to 19 (MLDCLRLALLCALPWLLRA) is a signal peptide. Topologically, residues 20–309 (AVPGHQEEPL…SIKESVYVKS (290 aa)) are extracellular. N-linked (GlcNAc...) asparagine glycosylation is found at Asn67, Asn83, Asn136, and Asn282. Residues 310–330 (SLFSIFVFLSFYLGCLLVVLV) traverse the membrane as a helical segment. Residues 331 to 442 (HHVRFQRKSI…DRRIVSKKYK (112 aa)) are Cytoplasmic-facing. A disordered region spans residues 344 to 409 (FGSSDGSGNM…VEESDFDTMP (66 aa)). The segment covering 375–386 (SSSSPGRQMSSS) has biased composition (low complexity). The segment covering 398–409 (SSVEESDFDTMP) has biased composition (acidic residues). A helical transmembrane segment spans residues 443-463 (IYFWNIITIAVFYALPVMQLV). The Extracellular portion of the chain corresponds to 464 to 494 (ITYQTVVNVTGNQDICYYNFLCAHPLGVLSA). N-linked (GlcNAc...) asparagine glycosylation is present at Asn471. A helical membrane pass occupies residues 495 to 515 (FNNILSNLGHVLLGFLFLLIV). The Cytoplasmic segment spans residues 516-541 (LRRDLLHRRALEAKDIFAMEYGIPKH). The helical transmembrane segment at 542 to 562 (FGLFYAMGIALMMEGVLSACY) threads the bilayer. The Extracellular portion of the chain corresponds to 563-572 (HVCPNYSNFQ). N-linked (GlcNAc...) asparagine glycosylation occurs at Asn567. The chain crosses the membrane as a helical span at residues 573–590 (FDTSFMYMIAGLCMLKLY). The Cytoplasmic segment spans residues 591-600 (QTRHPDINAS). The helical transmembrane segment at 601 to 621 (AYSAYASFAVVITLTVLGVVF) threads the bilayer. Residues 622 to 626 (GKNDV) are Extracellular-facing. Residues 627–647 (WFWIIFSAIHILSSLALSTQI) form a helical membrane-spanning segment. Residues 648-683 (YYMGRFKIDLGIFRRAAMVFYTDCIQQCSRPLYMDR) are Cytoplasmic-facing. A helical membrane pass occupies residues 684 to 704 (MVLLIVGNLVNWSFAFFGLIY). Residues 705–710 (RPRDFA) lie on the Extracellular side of the membrane. Residues 711–731 (SYMLGIFICNLLLYLAFYIIM) form a helical membrane-spanning segment. Topologically, residues 732 to 741 (KLRSSEKVLP) are cytoplasmic. Residues 742 to 762 (LPVFCIAATAVVWAAALYFFF) form a helical membrane-spanning segment. At 763 to 791 (QNLSSWEGTPAESREKNRECVLLDFFDDH) the chain is on the extracellular side. N-linked (GlcNAc...) asparagine glycosylation is present at Asn764. A helical transmembrane segment spans residues 792 to 812 (DIWHFLSATALFFSFLVLLTL). The Cytoplasmic segment spans residues 813–827 (DDDLDVVRRDQIPVF).

This sequence belongs to the SID1 family.

Its subcellular location is the membrane. Functionally, in vitro binds long double-stranded RNA (dsRNA) (500 and 700 base pairs), but not dsRNA shorter than 300 bp. Not involved in RNA autophagy, a process in which RNA is directly imported into lysosomes in an ATP-dependent manner, and degraded. In Mus musculus (Mouse), this protein is SID1 transmembrane family member 1 (Sidt1).